Consider the following 114-residue polypeptide: MFGACYKQPLKPSGSEPPAEECRMTPRHAGCDVTEMQRILSQPTFTEHLLRAVCTKLANMYSTSTDCREHCRRGMKAKQLKAEAGRSCQRKGVPIQTPREHSWISCKKEFEANP.

The disordered stretch occupies residues methionine 1–methionine 24.

As to expression, expressed in kidney and liver.

This is an uncharacterized protein from Homo sapiens (Human).